The sequence spans 277 residues: Large ribosomal subunit protein uL2 (277 aa).

2 disordered regions span residues 36-58 (PLHK…GGGH) and 219-277 (TVRG…RKNK). Basic residues predominate over residues 258 to 277 (KTRKKKNKSDKFIVRRRKNK).

This sequence belongs to the universal ribosomal protein uL2 family. In terms of assembly, part of the 50S ribosomal subunit. Forms a bridge to the 30S subunit in the 70S ribosome.

Functionally, one of the primary rRNA binding proteins. Required for association of the 30S and 50S subunits to form the 70S ribosome, for tRNA binding and peptide bond formation. It has been suggested to have peptidyltransferase activity; this is somewhat controversial. Makes several contacts with the 16S rRNA in the 70S ribosome. The polypeptide is Large ribosomal subunit protein uL2 (Bacillus velezensis (strain DSM 23117 / BGSC 10A6 / LMG 26770 / FZB42) (Bacillus amyloliquefaciens subsp. plantarum)).